The primary structure comprises 253 residues: Sulfate transporter CysZ (253 aa).

The next 4 membrane-spanning stretches (helical) occupy residues 31 to 51 (FVIL…WWLF), 75 to 95 (LLWP…FSTI), 151 to 171 (IVLL…PVLW), and 222 to 242 (IPLL…AMWV).

It belongs to the CysZ family.

It localises to the cell inner membrane. In terms of biological role, high affinity, high specificity proton-dependent sulfate transporter, which mediates sulfate uptake. Provides the sulfur source for the cysteine synthesis pathway. The chain is Sulfate transporter CysZ from Escherichia coli O127:H6 (strain E2348/69 / EPEC).